A 260-amino-acid chain; its full sequence is Exosome complex component Rrp4 (260 aa).

In terms of domain architecture, S1 motif spans 59–128 (NDVVIGIVIV…NSMKVELALR (70 aa)). Positions 136-194 (KTGQIVEVEPVKVPRVIGHGGSMISMLKKETNCSIFVGQNGRIWIDGKDDDVELLSKAL) constitute a KH domain.

It belongs to the RRP4 family. Component of the archaeal exosome complex. Forms a trimer of Rrp4 and/or Csl4 subunits. The trimer associates with a hexameric ring-like arrangement composed of 3 Rrp41-Rrp42 heterodimers.

The protein localises to the cytoplasm. Non-catalytic component of the exosome, which is a complex involved in RNA degradation. Increases the RNA binding and the efficiency of RNA degradation. Confers strong poly(A) specificity to the exosome. The protein is Exosome complex component Rrp4 of Methanosarcina barkeri (strain Fusaro / DSM 804).